A 134-amino-acid polypeptide reads, in one-letter code: Profilin-2 (134 aa).

An intrachain disulfide couples Cys13 to Cys118. The short motif at 84-100 (AVIRGKKGSGGITIKKT) is the Involved in PIP2 interaction element. At Thr114 the chain carries Phosphothreonine.

This sequence belongs to the profilin family. Occurs in many kinds of cells as a complex with monomeric actin in a 1:1 ratio. Post-translationally, phosphorylated by MAP kinases.

The protein resides in the cytoplasm. It is found in the cytoskeleton. Functionally, binds to actin and affects the structure of the cytoskeleton. At high concentrations, profilin prevents the polymerization of actin, whereas it enhances it at low concentrations. The sequence is that of Profilin-2 from Olea europaea (Common olive).